The following is a 323-amino-acid chain: Acetyl esterase (323 aa).

The short motif at 91–93 is the Involved in the stabilization of the negatively charged intermediate by the formation of the oxyanion hole element; it reads HGG. Residues S165, D262, and H292 contribute to the active site.

Belongs to the 'GDXG' lipolytic enzyme family. Homodimer. Interacts with MalT and MelA.

Its subcellular location is the cytoplasm. Displays esterase activity towards short chain fatty esters (acyl chain length of up to 8 carbons). Able to hydrolyze triacetylglycerol (triacetin) and tributyrylglycerol (tributyrin), but not trioleylglycerol (triolein) or cholesterol oleate. Negatively regulates MalT activity by antagonizing maltotriose binding. Inhibits MelA galactosidase activity. The polypeptide is Acetyl esterase (Salmonella dublin (strain CT_02021853)).